Reading from the N-terminus, the 348-residue chain is Holliday junction branch migration complex subunit RuvB (348 aa).

The interval 1-184 (MTLNRDMVSP…FGIVQRLEFY (184 aa)) is large ATPase domain (RuvB-L). 9 residues coordinate ATP: Leu-23, Arg-24, Gly-65, Lys-68, Thr-69, Thr-70, Arg-174, Tyr-184, and Arg-221. Thr-69 contacts Mg(2+). A small ATPAse domain (RuvB-S) region spans residues 185-255 (AVDHLVLIVE…VAQKALDLLD (71 aa)). Positions 258–348 (SHGFDTMDRK…QEVSDLFPNE (91 aa)) are head domain (RuvB-H). Positions 294, 313, and 318 each coordinate DNA.

This sequence belongs to the RuvB family. As to quaternary structure, homohexamer. Forms an RuvA(8)-RuvB(12)-Holliday junction (HJ) complex. HJ DNA is sandwiched between 2 RuvA tetramers; dsDNA enters through RuvA and exits via RuvB. An RuvB hexamer assembles on each DNA strand where it exits the tetramer. Each RuvB hexamer is contacted by two RuvA subunits (via domain III) on 2 adjacent RuvB subunits; this complex drives branch migration. In the full resolvosome a probable DNA-RuvA(4)-RuvB(12)-RuvC(2) complex forms which resolves the HJ.

The protein resides in the cytoplasm. It catalyses the reaction ATP + H2O = ADP + phosphate + H(+). Functionally, the RuvA-RuvB-RuvC complex processes Holliday junction (HJ) DNA during genetic recombination and DNA repair, while the RuvA-RuvB complex plays an important role in the rescue of blocked DNA replication forks via replication fork reversal (RFR). RuvA specifically binds to HJ cruciform DNA, conferring on it an open structure. The RuvB hexamer acts as an ATP-dependent pump, pulling dsDNA into and through the RuvAB complex. RuvB forms 2 homohexamers on either side of HJ DNA bound by 1 or 2 RuvA tetramers; 4 subunits per hexamer contact DNA at a time. Coordinated motions by a converter formed by DNA-disengaged RuvB subunits stimulates ATP hydrolysis and nucleotide exchange. Immobilization of the converter enables RuvB to convert the ATP-contained energy into a lever motion, pulling 2 nucleotides of DNA out of the RuvA tetramer per ATP hydrolyzed, thus driving DNA branch migration. The RuvB motors rotate together with the DNA substrate, which together with the progressing nucleotide cycle form the mechanistic basis for DNA recombination by continuous HJ branch migration. Branch migration allows RuvC to scan DNA until it finds its consensus sequence, where it cleaves and resolves cruciform DNA. This chain is Holliday junction branch migration complex subunit RuvB, found in Nitrosococcus oceani (strain ATCC 19707 / BCRC 17464 / JCM 30415 / NCIMB 11848 / C-107).